Here is a 593-residue protein sequence, read N- to C-terminus: Potassium channel KAT6 (593 aa).

Residues 1 to 33 (MAASRSELLRPAFGEPSPSLGPFVVNPHTCSYR) lie on the Cytoplasmic side of the membrane. Residues 34–54 (WWQKFLIVLVLYTAWASPFEL) traverse the membrane as a helical segment. Over 55-64 (AMEKSASAAL) the chain is Extracellular. The chain crosses the membrane as a helical span at residues 65-85 (AVTELVVDAFFAVDIAVSFFV). At 86 to 106 (AYRDASTGLLVTDRKKIATRH) the chain is on the cytoplasmic side. Residues 107–129 (LARPCLALDVASTIPLQMIYRIV) traverse the membrane as a helical segment. Residues 130–138 (SGKRQALYG) lie on the Extracellular side of the membrane. A helical; Voltage-sensor membrane pass occupies residues 139–159 (LLNLLRLWRLRRVSKLFARLE). At 160–173 (KDIRFSYLWTRLIK) the chain is on the cytoplasmic side. A helical transmembrane segment spans residues 174–194 (LLYVTLFAVHFASCIYLWMAF). At 195–221 (HHKAKELTWIGSQFHGFEDRSVWFCYT) the chain is on the extracellular side. Positions 222–241 (CAVYWSITTLATVGYGDLHA) form an intramembrane region, pore-forming. At 242 to 247 (ANTGEM) the chain is on the extracellular side. A helical membrane pass occupies residues 248–268 (LFSIAFMLFNMGLTSYIIGNI). The Cytoplasmic portion of the chain corresponds to 269-593 (TNLVVHETTN…RDGDHLFFSW (325 aa)). Residue 350–470 (LFQGVSDKLV…VVVFSNFVLY (121 aa)) coordinates a nucleoside 3',5'-cyclic phosphate. The KHA domain occupies 522–593 (RVSIHEHLLN…RDGDHLFFSW (72 aa)).

It belongs to the potassium channel family. Plant (TC 1.A.1.4) subfamily.

The protein localises to the membrane. Functionally, probable inward-rectifying potassium channel. Assuming opened or closed conformations in response to the voltage difference across the membrane, the channel is activated by hyperpolarization. This is Potassium channel KAT6 from Oryza sativa subsp. japonica (Rice).